A 360-amino-acid polypeptide reads, in one-letter code: Phospho-N-acetylmuramoyl-pentapeptide-transferase (360 aa).

The Periplasmic portion of the chain corresponds to methionine 1–arginine 25. Residues alanine 26 to alanine 46 traverse the membrane as a helical segment. Residues histidine 47–threonine 71 are Cytoplasmic-facing. The helical transmembrane segment at proline 72–tyrosine 92 threads the bilayer. Residue proline 93 is a topological domain, periplasmic. The chain crosses the membrane as a helical span at residues serine 94–valine 114. The Cytoplasmic portion of the chain corresponds to aspartate 115–arginine 131. The helical transmembrane segment at tryptophan 132–glycine 152 threads the bilayer. Residues lysine 153–aspartate 167 are Periplasmic-facing. Residues valine 168 to glycine 188 form a helical membrane-spanning segment. Residues asparagine 189–aspartate 198 lie on the Cytoplasmic side of the membrane. The chain crosses the membrane as a helical span at residues glycine 199 to threonine 219. The Periplasmic portion of the chain corresponds to glycine 220–histidine 235. Residues alanine 236 to phenylalanine 256 traverse the membrane as a helical segment. The Cytoplasmic portion of the chain corresponds to asparagine 257–glutamine 262. A helical membrane pass occupies residues valine 263–leucine 283. Residues leucine 284–glutamate 287 lie on the Periplasmic side of the membrane. A helical transmembrane segment spans residues phenylalanine 288–valine 308. Over glycine 309–arginine 337 the chain is Cytoplasmic. The chain crosses the membrane as a helical span at residues valine 338–lysine 358. Residues valine 359 to arginine 360 are Periplasmic-facing.

It belongs to the glycosyltransferase 4 family. MraY subfamily. Requires Mg(2+) as cofactor.

The protein resides in the cell inner membrane. It carries out the reaction UDP-N-acetyl-alpha-D-muramoyl-L-alanyl-gamma-D-glutamyl-meso-2,6-diaminopimeloyl-D-alanyl-D-alanine + di-trans,octa-cis-undecaprenyl phosphate = di-trans,octa-cis-undecaprenyl diphospho-N-acetyl-alpha-D-muramoyl-L-alanyl-D-glutamyl-meso-2,6-diaminopimeloyl-D-alanyl-D-alanine + UMP. It participates in cell wall biogenesis; peptidoglycan biosynthesis. In terms of biological role, catalyzes the initial step of the lipid cycle reactions in the biosynthesis of the cell wall peptidoglycan: transfers peptidoglycan precursor phospho-MurNAc-pentapeptide from UDP-MurNAc-pentapeptide onto the lipid carrier undecaprenyl phosphate, yielding undecaprenyl-pyrophosphoryl-MurNAc-pentapeptide, known as lipid I. This is Phospho-N-acetylmuramoyl-pentapeptide-transferase from Escherichia coli O157:H7.